Here is a 661-residue protein sequence, read N- to C-terminus: SUMO-activating enzyme subunit 2 (661 aa).

ATP-binding positions include 29–34 (GAGGIG), D53, 61–64 (NLNR), K77, and 122–127 (DNISAR). 2 residues coordinate Zn(2+): C163 and C166. The active-site Glycyl thioester intermediate is C178. Residues C436 and C439 each coordinate Zn(2+). The tract at residues 545 to 661 (KKQQQKEKDQ…SKKLKSNLQD (117 aa)) is disordered. The span at 548–563 (QQKEKDQKEGKTTTIE) shows a compositional bias: basic and acidic residues. Composition is skewed to low complexity over residues 577 to 607 (TSQT…NNNN) and 623 to 634 (SSTTTSSATPSI).

This sequence belongs to the ubiquitin-activating E1 family. As to quaternary structure, heterodimer of sae1 and sae2. The complex binds sumo via sae2.

It localises to the nucleus. The protein operates within protein modification; protein sumoylation. The dimeric enzyme acts as an E1 ligase for sumo. It mediates ATP-dependent activation of sumo and formation of a thioester with a conserved cysteine residue on sae2. The sequence is that of SUMO-activating enzyme subunit 2 (uba2) from Dictyostelium discoideum (Social amoeba).